Consider the following 87-residue polypeptide: COMM domain-containing protein 6 (87 aa).

At Met-1 the chain carries N-acetylmethionine. The COMM domain maps to 20–87 (QLIDFQWKLG…KEIAAVIETV (68 aa)).

It belongs to the COMM domain-containing protein 6 family. As to quaternary structure, component of the commander complex consisting of the CCC subcomplex and the retriever subcomplex. Component of the CCC (COMMD/CCDC22/CCDC93) subcomplex consisting of COMMD1, COMMD2, COMMD3, COMMD4, COMMD5, COMMD6, COMMD7, COMMD8, COMMD9, COMMD10, CCDC22 and CCDC93; within the complex forms a heterodimer with COMMD1. May form a homodimer with isoform 1. Interacts with RELA, RELB, NFKB1/p105. Does not interact with NFKBIB. Interacts with CCDC22, CCDC93, SCNN1B, CUL4A.

It localises to the nucleus. The protein resides in the cytoplasm. Its function is as follows. Scaffold protein in the commander complex that is essential for endosomal recycling of transmembrane cargos; the commander complex is composed of the CCC subcomplex and the retriever subcomplex. May modulate activity of cullin-RING E3 ubiquitin ligase (CRL) complexes. Down-regulates activation of NF-kappa-B. Inhibits TNF-induced NFKB1 activation. The sequence is that of COMM domain-containing protein 6 (Commd6) from Mus musculus (Mouse).